A 770-amino-acid polypeptide reads, in one-letter code: Jhy protein (770 aa).

Disordered regions lie at residues 1-249 (MNKY…SKQY), 295-438 (TVQN…SFVS), 493-527 (HRHESPSQRAPQSDHHMNTHRSTKTKKPAKQPQAE), 595-647 (ESQL…KRDV), and 708-740 (DYAKTIPKPKPPNLPDQTAKKTKNSRHSEKEGG). Residues 57–71 (SWSDIKDQIQDKDME) show a composition bias toward basic and acidic residues. Positions 72–85 (PDSLEEDSPSETEE) are enriched in acidic residues. Residues 112-134 (HQVEDKYSDLRYDPNWKNKREEG) are compositionally biased toward basic and acidic residues. A compositionally biased stretch (low complexity) spans 218 to 229 (SGLSQYLKSSSS). A compositionally biased stretch (basic and acidic residues) spans 295-314 (TVQNDKEVENTFMDPEDKWH). The span at 340-354 (RGQSSDAANGQQPSR) shows a compositional bias: polar residues. Positions 355–370 (RTAKARVRKQRKHQKG) are enriched in basic residues. Residues 383–398 (QNNQNNPFQQPQNQRQ) show a composition bias toward low complexity. Polar residues predominate over residues 410 to 438 (AQTNASNPNLQDARTLTHNPKVTSDSFVS). A compositionally biased stretch (basic and acidic residues) spans 493 to 509 (HRHESPSQRAPQSDHHM). Composition is skewed to basic residues over residues 510–521 (NTHRSTKTKKPA) and 625–642 (GKRHRKRSSTKSSKLKGY).

As to expression, expressed in the brain, specifically in hypothalamus, pineal gland, and ependymal cells of the aqueduct of Sylvius, as well as in the choroid plexus of the third ventricle. Expressed in the ependymal cells lining the lateral ventricles (at protein level).

Functionally, required for the normal development of cilia in brain ependymal cells lining the ventricular surfaces. In Mus musculus (Mouse), this protein is Jhy protein.